A 532-amino-acid chain; its full sequence is Calnexin homolog 2 (532 aa).

Positions 1–25 (MRERIITFVSLLLVALLSFPSVSYC) are cleaved as a signal peptide. The Lumenal portion of the chain corresponds to 26 to 468 (DDQTILYESF…EKAETQPNLT (443 aa)). Ca(2+) contacts are provided by S34 and D65. Residues C110 and C145 are joined by a disulfide bond. An alpha-D-glucoside contacts are provided by Y114, K116, Y136, and D143. The tract at residues 208–302 (NLLSAEDFEP…DEEDGEWEAP (95 aa)) is disordered. Positions 225–358 (IPDPEDKKPE…RDIPNPDYFE (134 aa)) are p domain (Extended arm). Over residues 226–242 (PDPEDKKPEDWDERAKI) the composition is skewed to basic and acidic residues. 5 tandem repeats follow at residues 227–238 (DPEDKKPEDWDE), 244–255 (DPNAVKPDDWDE), 263–274 (DEEAEKPEGWLD), 282–293 (DPEASKPEDWDD), and 297–307 (GEWEAPKVSNT). 4 X approximate repeats stretches follow at residues 227–293 (DPED…DWDD) and 297–354 (GEWE…IPNP). Acidic residues-rich tracts occupy residues 252-283 (DWDEDAPMEIEDEEAEKPEGWLDDEPVEVEDP) and 290-299 (DWDDEEDGEW). C309 and C315 are disulfide-bonded. Tandem repeats lie at residues 316–326 (GEWKRPMKRNP), 330–340 (GKWSSPLIDNP), and 344–354 (GIWKPRDIPNP). Residue E373 coordinates an alpha-D-glucoside. Ca(2+) is bound at residue D384. N466 is a glycosylation site (N-linked (GlcNAc...) asparagine). A helical transmembrane segment spans residues 469–489 (IGVLISIVIVFLSLFFKLIFG). Topologically, residues 490-532 (GAKAKVEKKKPETAAETSTSEAKTEEKAEAVAAPRKRQTRRES) are cytoplasmic. A disordered region spans residues 493–532 (AKVEKKKPETAAETSTSEAKTEEKAEAVAAPRKRQTRRES). The span at 523 to 532 (PRKRQTRRES) shows a compositional bias: basic residues.

It belongs to the calreticulin family.

Its subcellular location is the endoplasmic reticulum membrane. In terms of biological role, calcium-binding protein that interacts with newly synthesized monoglucosylated glycoproteins in the endoplasmic reticulum. It may act in assisting protein assembly and/or in the retention within the ER of unassembled protein subunits. It seems to play a major role in the quality control apparatus of the ER by the retention of incorrectly folded proteins. The protein is Calnexin homolog 2 of Arabidopsis thaliana (Mouse-ear cress).